A 274-amino-acid chain; its full sequence is Hydroxyethylthiazole kinase (274 aa).

M50 serves as a coordination point for substrate. The ATP site is built by R126 and S171. Position 200 (A200) interacts with substrate.

Belongs to the Thz kinase family. Requires Mg(2+) as cofactor.

The enzyme catalyses 5-(2-hydroxyethyl)-4-methylthiazole + ATP = 4-methyl-5-(2-phosphooxyethyl)-thiazole + ADP + H(+). It participates in cofactor biosynthesis; thiamine diphosphate biosynthesis; 4-methyl-5-(2-phosphoethyl)-thiazole from 5-(2-hydroxyethyl)-4-methylthiazole: step 1/1. In terms of biological role, catalyzes the phosphorylation of the hydroxyl group of 4-methyl-5-beta-hydroxyethylthiazole (THZ). In Acinetobacter baylyi (strain ATCC 33305 / BD413 / ADP1), this protein is Hydroxyethylthiazole kinase.